The chain runs to 701 residues: SH3 domain-binding protein 1 (701 aa).

Basic residues predominate over residues 1–10 (MMKRQLHRMR). Disordered stretches follow at residues 1–23 (MMKR…RTPE) and 160–182 (SQAT…HSHT). The tract at residues 1–275 (MMKRQLHRMR…TATHFPRVYG (275 aa)) is interaction with CGNL1. In terms of domain architecture, BAR spans 17–262 (SLGRTPETAE…RENHGQADHS (246 aa)). A phosphoserine mark is found at serine 175, serine 241, serine 262, and serine 264. Residues 276–469 (VSLATHLQEL…ALIQSADTLF (194 aa)) form the Rho-GAP domain. An interaction with CD2AP region spans residues 470–701 (PGDINFNVSG…RPRSLASETN (232 aa)). The segment at 496-701 (SEELPSTAVP…RPRSLASETN (206 aa)) is disordered. Over residues 508 to 522 (ATTPAPAPAPAPAPA) the composition is skewed to pro residues. Phosphoserine occurs at positions 544 and 550. 2 stretches are compositionally biased toward pro residues: residues 570 to 579 (PARPTMPPPQ) and 587 to 596 (PPAPPLPPGS). Residue threonine 601 is modified to Phosphothreonine. Positions 616–625 (APTVPPPLPP) match the SH3-binding motif. Composition is skewed to pro residues over residues 618–630 (TVPP…PPQP) and 641–652 (SPSPASPGPASP). At threonine 626 the chain carries Phosphothreonine. Serine 653 bears the Phosphoserine mark. Positions 666 to 677 (GAATAEGGAPEA) are enriched in low complexity. A compositionally biased stretch (pro residues) spans 682–692 (PTPPAIPPQPR).

In terms of assembly, interacts with RAC1. Interacts with the exocyst via EXOC4 and EXOC8; required for the localization of both SH3BP1 and the exocyst to the leading edge of migrating cells. Interacts with CD2AP and CGNL1; probably part of a complex at cell junctions. Interacts with CAPZA1; recruits CAPZA1 to forming cell junctions. May interact with AFDN. Interacts with PLXND1; they dissociate upon SEMA3E binding to PLXND1 allowing SH3BP1 to transduce downstream signal through RAC1 inactivation. Interacts with ABL1, GRB2 and SRC (via SH3 domain).

It localises to the cell projection. It is found in the cell junction. The protein localises to the tight junction. The protein resides in the adherens junction. Its subcellular location is the phagocytic cup. It localises to the nucleus. It is found in the cytoplasm. The protein localises to the cytosol. GTPase activating protein (GAP) which specifically converts GTP-bound Rho-type GTPases including RAC1 and CDC42 in their inactive GDP-bound form. By specifically inactivating RAC1 at the leading edge of migrating cells, it regulates the spatiotemporal organization of cell protrusions which is important for proper cell migration. Also negatively regulates CDC42 in the process of actin remodeling and the formation of epithelial cell junctions. Through its GAP activity toward RAC1 and/or CDC42 plays a specific role in phagocytosis of large particles. Specifically recruited by a PI3 kinase/PI3K-dependent mechanism to sites of large particles engagement, inactivates RAC1 and/or CDC42 allowing the reorganization of the underlying actin cytoskeleton required for engulfment. It also plays a role in angiogenesis and the process of repulsive guidance as part of a semaphorin-plexin signaling pathway. Following the binding of PLXND1 to extracellular SEMA3E it dissociates from PLXND1 and inactivates RAC1, inducing the intracellular reorganization of the actin cytoskeleton and the collapse of cells. This Homo sapiens (Human) protein is SH3 domain-binding protein 1.